Reading from the N-terminus, the 261-residue chain is Lipase LipV (261 aa).

Serine 87 serves as the catalytic Nucleophile. Residues aspartate 217 and histidine 240 each act as charge relay system in the active site.

The protein belongs to the AB hydrolase superfamily.

The enzyme catalyses a carboxylic ester + H2O = an alcohol + a carboxylate + H(+). It carries out the reaction a tetradecanoate ester + H2O = an aliphatic alcohol + tetradecanoate + H(+). The catalysed reaction is decanoate ester + H2O = decanoate + an aliphatic alcohol + H(+). It catalyses the reaction an octanoate ester + H2O = an aliphatic alcohol + octanoate + H(+). The enzyme catalyses a dodecanoate ester + H2O = an aliphatic alcohol + dodecanoate + H(+). It carries out the reaction a butanoate ester + H2O = an aliphatic alcohol + butanoate + H(+). The catalysed reaction is hexadecanoate ester + H2O = an aliphatic alcohol + hexadecanoate + H(+). It catalyses the reaction octadecanoate ester + H2O = an aliphatic alcohol + octadecanoate + H(+). With respect to regulation, is inhibited by tetrahydrolipstatin, a specific lipase inhibitor and RHC 80267, a diacylglycerol lipase inhibitor, but not by phenylglyoxal and iodoacetate. Its function is as follows. Lipase that displays broad substrate specificity and preferentially hydrolyzes p-nitrophenyl myristate in vitro. Also shows significant activity with pNP-butyrate (68%), pNP-octanoate (82%), pNP-decanoate (90%), and pNP-laurate (74%). Is probably involved in lipid catabolism. Is active at low pH, and might play some important role in mycobacterial biology in macrophages where the bacteria encounters acidic stress. In Mycobacterium tuberculosis (strain ATCC 25618 / H37Rv), this protein is Lipase LipV.